The following is a 30-amino-acid chain: MPFSPDIAYSINYALGKYFFHRISHFLESA.

This is an uncharacterized protein from Saccharomyces cerevisiae (strain ATCC 204508 / S288c) (Baker's yeast).